The chain runs to 337 residues: DNA-directed RNA polymerase subunit alpha (337 aa).

Residues 1-233 (MVREKVRVST…DLFIPFLHAE (233 aa)) form an alpha N-terminal domain (alpha-NTD) region. An alpha C-terminal domain (alpha-CTD) region spans residues 267–337 (IALKSIFIDQ…KAFHNPFTEE (71 aa)).

This sequence belongs to the RNA polymerase alpha chain family. In plastids the minimal PEP RNA polymerase catalytic core is composed of four subunits: alpha, beta, beta', and beta''. When a (nuclear-encoded) sigma factor is associated with the core the holoenzyme is formed, which can initiate transcription.

Its subcellular location is the plastid. The protein resides in the chloroplast. It catalyses the reaction RNA(n) + a ribonucleoside 5'-triphosphate = RNA(n+1) + diphosphate. DNA-dependent RNA polymerase catalyzes the transcription of DNA into RNA using the four ribonucleoside triphosphates as substrates. The polypeptide is DNA-directed RNA polymerase subunit alpha (Eucalyptus globulus subsp. globulus (Tasmanian blue gum)).